The sequence spans 354 residues: Large ribosomal subunit protein uL10 (354 aa).

Composition is skewed to acidic residues over residues 286 to 296 and 307 to 345; these read DEEALPEELQD and AEAD…DGDG. Positions 286 to 354 are disordered; that stretch reads DEEALPEELQ…GGDALGDMFG (69 aa).

The protein belongs to the universal ribosomal protein uL10 family. Part of the 50S ribosomal subunit. Forms part of the ribosomal stalk which helps the ribosome interact with GTP-bound translation factors. Forms a heptameric L10(L12)2(L12)2(L12)2 complex, where L10 forms an elongated spine to which the L12 dimers bind in a sequential fashion.

Forms part of the ribosomal stalk, playing a central role in the interaction of the ribosome with GTP-bound translation factors. The sequence is that of Large ribosomal subunit protein uL10 from Natronomonas pharaonis (strain ATCC 35678 / DSM 2160 / CIP 103997 / JCM 8858 / NBRC 14720 / NCIMB 2260 / Gabara) (Halobacterium pharaonis).